Consider the following 131-residue polypeptide: Small ribosomal subunit protein eS17 (131 aa).

This sequence belongs to the eukaryotic ribosomal protein eS17 family.

In Drosophila melanogaster (Fruit fly), this protein is Small ribosomal subunit protein eS17 (RpS17).